A 547-amino-acid polypeptide reads, in one-letter code: Chaperonin GroEL (547 aa).

ATP contacts are provided by residues 30-33 (TLGP), Lys51, 87-91 (DGTTT), Gly415, and Asp495. The interval 525 to 547 (PDEKEAGGGAPDMGGMGGMGGMM) is disordered. Gly residues predominate over residues 531-547 (GGGAPDMGGMGGMGGMM).

The protein belongs to the chaperonin (HSP60) family. Forms a cylinder of 14 subunits composed of two heptameric rings stacked back-to-back. Interacts with the co-chaperonin GroES.

Its subcellular location is the cytoplasm. The enzyme catalyses ATP + H2O + a folded polypeptide = ADP + phosphate + an unfolded polypeptide.. Functionally, together with its co-chaperonin GroES, plays an essential role in assisting protein folding. The GroEL-GroES system forms a nano-cage that allows encapsulation of the non-native substrate proteins and provides a physical environment optimized to promote and accelerate protein folding. The chain is Chaperonin GroEL from Chromohalobacter salexigens (strain ATCC BAA-138 / DSM 3043 / CIP 106854 / NCIMB 13768 / 1H11).